The following is a 55-amino-acid chain: Small ribosomal subunit protein eS31 (55 aa).

The Zn(2+) site is built by C27, C30, C45, and C48. Residues 27 to 48 (CSRCGKGFFMAQHKDRRSCGKC) form a C4-type zinc finger.

The protein belongs to the eukaryotic ribosomal protein eS31 family. In terms of assembly, part of the 30S ribosomal subunit. Requires Zn(2+) as cofactor.

The protein is Small ribosomal subunit protein eS31 of Cenarchaeum symbiosum (strain A).